The following is a 182-amino-acid chain: Large ribosomal subunit protein uL5 (182 aa).

It belongs to the universal ribosomal protein uL5 family. Part of the 50S ribosomal subunit; part of the 5S rRNA/L5/L18/L25 subcomplex. Contacts the 5S rRNA and the P site tRNA. Forms a bridge to the 30S subunit in the 70S ribosome.

This is one of the proteins that bind and probably mediate the attachment of the 5S RNA into the large ribosomal subunit, where it forms part of the central protuberance. In the 70S ribosome it contacts protein S13 of the 30S subunit (bridge B1b), connecting the 2 subunits; this bridge is implicated in subunit movement. Contacts the P site tRNA; the 5S rRNA and some of its associated proteins might help stabilize positioning of ribosome-bound tRNAs. The protein is Large ribosomal subunit protein uL5 of Borrelia duttonii (strain Ly).